We begin with the raw amino-acid sequence, 615 residues long: 1-deoxy-D-xylulose-5-phosphate synthase (615 aa).

Residues His72 and 111-113 contribute to the thiamine diphosphate site; that span reads GHS. Position 142 (Asp142) interacts with Mg(2+). Thiamine diphosphate is bound by residues 143–144, Asn171, Tyr278, and Glu360; that span reads GA. Asn171 lines the Mg(2+) pocket.

The protein belongs to the transketolase family. DXPS subfamily. In terms of assembly, homodimer. Mg(2+) is required as a cofactor. Thiamine diphosphate serves as cofactor.

The catalysed reaction is D-glyceraldehyde 3-phosphate + pyruvate + H(+) = 1-deoxy-D-xylulose 5-phosphate + CO2. Its pathway is metabolic intermediate biosynthesis; 1-deoxy-D-xylulose 5-phosphate biosynthesis; 1-deoxy-D-xylulose 5-phosphate from D-glyceraldehyde 3-phosphate and pyruvate: step 1/1. In terms of biological role, catalyzes the acyloin condensation reaction between C atoms 2 and 3 of pyruvate and glyceraldehyde 3-phosphate to yield 1-deoxy-D-xylulose-5-phosphate (DXP). The protein is 1-deoxy-D-xylulose-5-phosphate synthase of Campylobacter jejuni subsp. jejuni serotype O:2 (strain ATCC 700819 / NCTC 11168).